A 760-amino-acid polypeptide reads, in one-letter code: MOXD1 homolog 2 (760 aa).

Positions methionine 1–arginine 34 are disordered. Positions proline 18–arginine 34 are enriched in low complexity. Residues cysteine 47–valine 67 form a helical membrane-spanning segment. Residues asparagine 78, asparagine 198, and asparagine 223 are each glycosylated (N-linked (GlcNAc...) asparagine). A DOMON domain is found at aspartate 117–histidine 233. Disulfide bonds link cysteine 339–cysteine 367, cysteine 467–cysteine 581, and cysteine 543–cysteine 565. The N-linked (GlcNAc...) asparagine glycan is linked to asparagine 668. The disordered stretch occupies residues arginine 678 to serine 701. A helical membrane pass occupies residues phenylalanine 740–threonine 760.

This sequence belongs to the copper type II ascorbate-dependent monooxygenase family.

Its subcellular location is the membrane. The protein is MOXD1 homolog 2 (olf413) of Drosophila melanogaster (Fruit fly).